The chain runs to 199 residues: Superoxide dismutase [Mn/Fe] (199 aa).

The Fe(3+) site is built by His27, His81, Asp161, and His165. Mn(2+) contacts are provided by His27, His81, Asp161, and His165.

The protein belongs to the iron/manganese superoxide dismutase family. In terms of assembly, homodimer. Mn(2+) is required as a cofactor. It depends on Fe(3+) as a cofactor.

It catalyses the reaction 2 superoxide + 2 H(+) = H2O2 + O2. Its function is as follows. Destroys superoxide anion radicals which are normally produced within the cells and which are toxic to biological systems. Catalyzes the dismutation of superoxide anion radicals into O2 and H2O2 by successive reduction and oxidation of the transition metal ion at the active site. The protein is Superoxide dismutase [Mn/Fe] (sodA) of Staphylococcus epidermidis.